Consider the following 537-residue polypeptide: Mitochondria-eating protein (537 aa).

Positions 1-273 (MADNLRRLVS…PCSRSHSRSR (273 aa)) are interaction with YWHAG/14-3-3 protein gamma. A phosphoserine mark is found at Ser85, Ser127, Ser154, and Ser157. Positions 115 to 253 (GTRDIQQLDA…SAEKSVLQGR (139 aa)) form a coiled coil. 2 disordered regions span residues 171–221 (QLKS…ANQR) and 249–293 (VLQG…AKLS). Over residues 179 to 217 (EESRHRNSDRRRSEKRGSERRRVELRGSEQRVSDLDRRS) the composition is skewed to basic and acidic residues. A compositionally biased stretch (low complexity) spans 253-287 (RSARSRSPSPAPCSRSHSRSRSTSPSSAKARTPSP). Phosphoserine occurs at positions 286 and 508.

This sequence belongs to the MIEAP family. In terms of assembly, interacts (via coiled-coil domains) with BNIP3L (via BH3 domain). Interacts (via coiled-coil domains) with BNIP3 (via BH3 domain). Interacts with YWHAG/14-3-3 protein gamma; a protein that also plays a role in MALM.

It localises to the cytoplasm. Its subcellular location is the cytosol. The protein resides in the mitochondrion outer membrane. It is found in the mitochondrion matrix. Functionally, key regulator of mitochondrial quality that mediates the repairing or degradation of unhealthy mitochondria in response to mitochondrial damage. Mediator of mitochondrial protein catabolic process (also named MALM) by mediating the degradation of damaged proteins inside mitochondria by promoting the accumulation in the mitochondrial matrix of hydrolases that are characteristic of the lysosomal lumen. Also involved in mitochondrion degradation of damaged mitochondria by promoting the formation of vacuole-like structures (named MIV), which engulf and degrade unhealthy mitochondria by accumulating lysosomes. The physical interaction of SPATA18/MIEAP, BNIP3 and BNIP3L/NIX at the mitochondrial outer membrane regulates the opening of a pore in the mitochondrial double membrane in order to mediate the translocation of lysosomal proteins from the cytoplasm to the mitochondrial matrix. Binds cardiolipin. May form molecular condensates (non-membrane-bounded organelles) within mitochondria that compartmentalize and promote cardiolipin metabolism. The protein is Mitochondria-eating protein (SPATA18) of Bos taurus (Bovine).